The primary structure comprises 495 residues: Lysine--tRNA ligase (495 aa).

Mg(2+) is bound by residues glutamate 406 and glutamate 413.

Belongs to the class-II aminoacyl-tRNA synthetase family. Homodimer. Mg(2+) is required as a cofactor.

The protein resides in the cytoplasm. It carries out the reaction tRNA(Lys) + L-lysine + ATP = L-lysyl-tRNA(Lys) + AMP + diphosphate. The protein is Lysine--tRNA ligase of Staphylococcus saprophyticus subsp. saprophyticus (strain ATCC 15305 / DSM 20229 / NCIMB 8711 / NCTC 7292 / S-41).